The chain runs to 382 residues: Trophoblast glycoprotein-like (382 aa).

The N-terminal stretch at Met-1 to Pro-26 is a signal peptide. Cystine bridges form between Cys-27-Cys-33 and Cys-31-Cys-43. The Extracellular segment spans residues Cys-27–Ser-307. LRR repeat units lie at residues Pro-57 to Gly-80, Leu-93 to Gly-116, Leu-117 to Gly-140, Leu-171 to Leu-194, and Arg-196 to Ala-217. A glycan (N-linked (GlcNAc...) asparagine) is linked at Asn-62. Disulfide bonds link Cys-238-Cys-264 and Cys-240-Cys-285. The chain crosses the membrane as a helical span at residues Tyr-308–Leu-328. Residues Asn-329 to Leu-382 are Cytoplasmic-facing. Residues Asp-358–Leu-382 are disordered. Low complexity predominate over residues Pro-365–Leu-382.

The protein resides in the membrane. The chain is Trophoblast glycoprotein-like (TPBGL) from Homo sapiens (Human).